A 61-amino-acid chain; its full sequence is Large ribosomal subunit protein bL28 (61 aa).

It belongs to the bacterial ribosomal protein bL28 family.

This Geobacillus kaustophilus (strain HTA426) protein is Large ribosomal subunit protein bL28.